Reading from the N-terminus, the 197-residue chain is Small ribosomal subunit protein uS4c (197 aa).

Residues 85 to 161 form the S4 RNA-binding domain; it reads MRLDNILFRL…TGKELANHLN (77 aa).

Belongs to the universal ribosomal protein uS4 family. Part of the 30S ribosomal subunit. Contacts protein S5. The interaction surface between S4 and S5 is involved in control of translational fidelity.

The protein localises to the plastid. In terms of biological role, one of the primary rRNA binding proteins, it binds directly to 16S rRNA where it nucleates assembly of the body of the 30S subunit. Functionally, with S5 and S12 plays an important role in translational accuracy. In Cuscuta obtusiflora (Peruvian dodder), this protein is Small ribosomal subunit protein uS4c (rps4).